The sequence spans 576 residues: Non-neuronal cytoplasmic intermediate filament protein (576 aa).

The disordered stretch occupies residues 1–51 (MTSKISTTYEEEGRQSKIQPRAFVITRSGPSSKSSSFSARQSYASSRQSIT). The head stretch occupies residues 2–75 (TSKISTTYEE…FRGTREKEKR (74 aa)). Residues 28–49 (SGPSSKSSSFSARQSYASSRQS) are compositionally biased toward low complexity. The IF rod domain occupies 73 to 425 (EKREMQNLNE…KLLEGEESRV (353 aa)). Positions 76–108 (EMQNLNERLASYIEKVHFLDAQVKKLEAENEAL) are coil 1A. A linker 1 region spans residues 109-122 (RNRKSESLQPIRDA). The segment at 123 to 260 (YENELAQARK…DLLDQLELLK (138 aa)) is coil 1B. Residues 261–278 (PEPIQIKGMDYAEFWKSE) form a linker 2 region. The segment at 279–425 (LSKCVREIQS…KLLEGEESRV (147 aa)) is coil 2. Residues 426 to 576 (GLRSLVEQAI…KATLIAKFSG (151 aa)) form a tail region. The LTD domain maps to 456 to 574 (GSMTIQRSSK…NEKATLIAKF (119 aa)).

It belongs to the intermediate filament family. As to quaternary structure, can form homopolymers.

Its subcellular location is the cytoplasm. The polypeptide is Non-neuronal cytoplasmic intermediate filament protein (Cornu aspersum (Brown garden snail)).